We begin with the raw amino-acid sequence, 163 residues long: Nucleotide-binding protein cbdbA1256 (163 aa).

It belongs to the YajQ family.

Its function is as follows. Nucleotide-binding protein. The polypeptide is Nucleotide-binding protein cbdbA1256 (Dehalococcoides mccartyi (strain CBDB1)).